A 1065-amino-acid polypeptide reads, in one-letter code: MPKRRDIETILVIGSGPIVIGQAAEFDYAGTQACLALKEEGYKVILVNSNPATIMTDTEIADKVYMEPLTLDFVARIIRKERPDAILPTLGGQTGLNLAVELAKAGVLEECGVEILGTKLEAIEKAEDREQFRALMNELGEPVPESAIIHSLEEAYAFVEQIGYPVIVRPAFTLGGTGGGICTNEEELVEIVSTGLKLSPVHQCLLERSIAGYKEIEYEVMRDANDNAIVVCNMENIDPVGIHTGDSIVVAPSQTLSDREYQLLRNASLKIIRALGIEGGCNVQLALDPDSFRYYVIEVNPRVSRSSALASKATGYPIAKLAAKIAVGLTLDEMINPVTGKTYACFEPALDYVVTKIPRFPFDKFESANRRLGTQMKATGEVMAIGRTFEESLLKAVRSLEIGVHHLELNEAKTAADDVMEKRIRKAGDERLFYIAEALRRGVTVETLHEWSQIDRFFLHKIQNIIEMETVLKNHPGDLDVLKKAKGLGFSDAAIAALWNKTERDIYAVRRQRGIMPVYKMVDTCAAEFTSETPYYYSTYEEENESIVTEKPSVIVLGSGPIRIGQGIEFDYATVHCVWAIKQAGYEAIIINNNPETVSTDFSTSDKLYFEPLTAEDVMHVIDLEQPIGVIVQFGGQTAINLAAELEARGVRLLGTTLEDLDRAEDRDKFEQALSELGIPKPAGKTAVSVEEAVAIAEEIGYPVLVRPSYVLGGRAMEIVYNRGELLHYMEHAVRVNPQHPVLVDRYITGKEVEVDAIADGETVVIPGIMEHIERAGVHSGDSIAVYPPQTLSAEVIDKIADYTIRLARGLHIVGLLNIQFVVSGSDVYVLEVNPRSSRTVPFLSKITGVPMANLATKAILGTKLAEMGYETGVCPVRPGVYVKVPVFSFAKLRNVDISLGPEMKSTGEVIGKDVTFEKALYKGLVASGIHIQPHGAVLLTVADKDKEEAVELARRFADIGYQLLATNGTAETLKAAGIPVTVVNKIHSASPNILDVIRQGKAQVVINTLTKGKQPESDGFRIRREAVENGIPCLTSLDTARAMLQVLESMTFSTTAMTEGLVRS.

The interval Met1–Glu401 is carboxyphosphate synthetic domain. ATP is bound by residues Arg129, Arg169, Gly175, Gly176, Arg208, Ile210, Glu215, Gly241, Ile242, His243, Gln284, and Glu298. Positions Arg133–Val327 constitute an ATP-grasp 1 domain. The Mg(2+) site is built by Gln284, Glu298, and Asn300. Residues Gln284, Glu298, and Asn300 each contribute to the Mn(2+) site. The segment at Ile402–Ser546 is oligomerization domain. The tract at residues Ile547–Gly929 is carbamoyl phosphate synthetic domain. The ATP-grasp 2 domain occupies Glu671–Leu861. 10 residues coordinate ATP: Arg707, Arg746, Ile748, Glu752, Gly777, Val778, His779, Ser780, Gln820, and Glu832. Residues Gln820, Glu832, and Asn834 each coordinate Mg(2+). Positions 820, 832, and 834 each coordinate Mn(2+). The region spanning Ile930–Ser1065 is the MGS-like domain. The tract at residues Ile930–Ser1065 is allosteric domain.

The protein belongs to the CarB family. Composed of two chains; the small (or glutamine) chain promotes the hydrolysis of glutamine to ammonia, which is used by the large (or ammonia) chain to synthesize carbamoyl phosphate. Tetramer of heterodimers (alpha,beta)4. Requires Mg(2+) as cofactor. It depends on Mn(2+) as a cofactor.

It carries out the reaction hydrogencarbonate + L-glutamine + 2 ATP + H2O = carbamoyl phosphate + L-glutamate + 2 ADP + phosphate + 2 H(+). The catalysed reaction is hydrogencarbonate + NH4(+) + 2 ATP = carbamoyl phosphate + 2 ADP + phosphate + 2 H(+). The protein operates within amino-acid biosynthesis; L-arginine biosynthesis; carbamoyl phosphate from bicarbonate: step 1/1. Its pathway is pyrimidine metabolism; UMP biosynthesis via de novo pathway; (S)-dihydroorotate from bicarbonate: step 1/3. Its function is as follows. Large subunit of the glutamine-dependent carbamoyl phosphate synthetase (CPSase). CPSase catalyzes the formation of carbamoyl phosphate from the ammonia moiety of glutamine, carbonate, and phosphate donated by ATP, constituting the first step of 2 biosynthetic pathways, one leading to arginine and/or urea and the other to pyrimidine nucleotides. The large subunit (synthetase) binds the substrates ammonia (free or transferred from glutamine from the small subunit), hydrogencarbonate and ATP and carries out an ATP-coupled ligase reaction, activating hydrogencarbonate by forming carboxy phosphate which reacts with ammonia to form carbamoyl phosphate. This Bacillus caldolyticus protein is Carbamoyl phosphate synthase large chain.